The following is a 183-amino-acid chain: Adenylate kinase (183 aa).

Position 12–17 (12–17 (GAGKGT)) interacts with ATP. The interval 32 to 61 (STGDLLRSEVSAGSALGQEAEAVMNRGELV) is NMP. Residues threonine 33, arginine 38, 59–61 (ELV), 86–89 (GFPR), and glutamine 93 contribute to the AMP site. Residues 127–133 (ARGRADD) are LID. Arginine 128 provides a ligand contact to ATP. AMP is bound by residues arginine 130 and arginine 141. Position 169 (glycine 169) interacts with ATP.

It belongs to the adenylate kinase family. In terms of assembly, monomer.

The protein localises to the cytoplasm. The enzyme catalyses AMP + ATP = 2 ADP. Its pathway is purine metabolism; AMP biosynthesis via salvage pathway; AMP from ADP: step 1/1. In terms of biological role, catalyzes the reversible transfer of the terminal phosphate group between ATP and AMP. Plays an important role in cellular energy homeostasis and in adenine nucleotide metabolism. This Synechococcus sp. (strain WH7803) protein is Adenylate kinase.